A 64-amino-acid polypeptide reads, in one-letter code: Bubble protein (64 aa).

Disulfide bonds link Cys-3–Cys-30, Cys-18–Cys-38, Cys-28–Cys-54, and Cys-49–Cys-64.

It is found in the secreted. In terms of biological role, may act as a toxin. May recognize a molecule or part of a molecule with a negatively charged surface potential. The chain is Bubble protein from Penicillium brevicompactum.